A 116-amino-acid chain; its full sequence is Protein Rev (116 aa).

S5 is subject to Phosphoserine; by host CK2. The tract at residues 18-26 (IIKILYQSN) is homomultimerization. Residues 26–48 (NPYSKPNGSRQARRNRRRRWRAR) are disordered. Positions 34–50 (SRQARRNRRRRWRARQN) match the Nuclear localization signal and RNA-binding (RRE) motif. Residues 36 to 47 (QARRNRRRRWRA) show a composition bias toward basic residues. Positions 73-84 (LQLPPIERLRLD) match the Nuclear export signal and binding to XPO1 motif. Residue S92 is modified to Phosphoserine; by host.

Belongs to the HIV-1 REV protein family. Homomultimer; when bound to the RRE. Multimeric assembly is essential for activity and may involve XPO1. Binds to human KPNB1, XPO1, TNPO1, RANBP5 and IPO7. Interacts with the viral Integrase. Interacts with human KHDRBS1. Interacts with human NAP1; this interaction decreases Rev multimerization and stimulates its activity. Interacts with human DEAD-box helicases DDX3 and DDX24; these interactions may serve for viral RNA export to the cytoplasm and packaging, respectively. Interacts with human PSIP1; this interaction may inhibit HIV-1 DNA integration by promoting dissociation of the Integrase-LEDGF/p75 complex. Post-translationally, asymmetrically arginine dimethylated at one site by host PRMT6. Methylation impairs the RNA-binding activity and export of viral RNA from the nucleus to the cytoplasm. Phosphorylated by protein kinase CK2. Presence of, and maybe binding to the N-terminus of the regulatory beta subunit of CK2 is necessary for CK2-mediated Rev's phosphorylation.

It localises to the host nucleus. The protein resides in the host nucleolus. The protein localises to the host cytoplasm. Functionally, escorts unspliced or incompletely spliced viral pre-mRNAs (late transcripts) out of the nucleus of infected cells. These pre-mRNAs carry a recognition sequence called Rev responsive element (RRE) located in the env gene, that is not present in fully spliced viral mRNAs (early transcripts). This function is essential since most viral proteins are translated from unspliced or partially spliced pre-mRNAs which cannot exit the nucleus by the pathway used by fully processed cellular mRNAs. Rev itself is translated from a fully spliced mRNA that readily exits the nucleus. Rev's nuclear localization signal (NLS) binds directly to KPNB1/Importin beta-1 without previous binding to KPNA1/Importin alpha-1. KPNB1 binds to the GDP bound form of RAN (Ran-GDP) and targets Rev to the nucleus. In the nucleus, the conversion from Ran-GDP to Ran-GTP dissociates Rev from KPNB1 and allows Rev's binding to the RRE in viral pre-mRNAs. Rev multimerization on the RRE via cooperative assembly exposes its nuclear export signal (NES) to the surface. Rev can then form a complex with XPO1/CRM1 and Ran-GTP, leading to nuclear export of the complex. Conversion from Ran-GTP to Ran-GDP mediates dissociation of the Rev/RRE/XPO1/RAN complex, so that Rev can return to the nucleus for a subsequent round of export. Beside KPNB1, also seems to interact with TNPO1/Transportin-1, RANBP5/IPO5 and IPO7/RANBP7 for nuclear import. The nucleoporin-like HRB/RIP is an essential cofactor that probably indirectly interacts with Rev to release HIV RNAs from the perinuclear region to the cytoplasm. The protein is Protein Rev of Homo sapiens (Human).